Consider the following 296-residue polypeptide: MESMAVATDGGERPGVPAGSGLSASQRRAELRRRKLLMNSEQRINRIMGFHRPGSGAEEESQTKSKQQDSDKLNSLSVPSVSKRVVLGDSVSTGTTDQQGGVAEVKGTQLGDKLDSFIKPPECSSDVNLELRQRNRGDLTADSVQRGSRHGLEQYLSRFEEAMKLRKQLISEKPSQEDGNTTEEFDSFRIFRLVGCALLALGVRAFVCKYLSIFAPFLTLQLAYMGLYKYFPKSEKKIKTTVLTAALLLSGIPAEVINRSMDTYSKMGEVFTDLCVYFFTFIFCHELLDYWGSEVP.

A disordered region spans residues 1–79; sequence MESMAVATDG…SDKLNSLSVP (79 aa). Residues 1–189 are Cytoplasmic-facing; it reads MESMAVATDG…NTTEEFDSFR (189 aa). A Phosphoserine modification is found at S55. Residues 61–72 are compositionally biased toward basic and acidic residues; that stretch reads SQTKSKQQDSDK. Residues 190–207 traverse the membrane as a helical segment; the sequence is IFRLVGCALLALGVRAFV. The Lumenal segment spans residues 208-212; the sequence is CKYLS. C208 and C284 are joined by a disulfide. The helical transmembrane segment at 213–231 threads the bilayer; it reads IFAPFLTLQLAYMGLYKYF. The Cytoplasmic portion of the chain corresponds to 232 to 269; it reads PKSEKKIKTTVLTAALLLSGIPAEVINRSMDTYSKMGE. Residues 270–288 form a helical membrane-spanning segment; it reads VFTDLCVYFFTFIFCHELL. Topologically, residues 289-296 are lumenal; sequence DYWGSEVP.

As to quaternary structure, component of the Golgi to ER traffic (GET) complex, which is composed of GET1/WRB, CAMLG/GET2 and GET3/TRC40. Within the complex, GET1 and CAMLG form a heterotetramer which is stabilized by phosphatidylinositol binding and which binds to the GET3 homodimer. Interacts (via C-terminus) with GET1. Interacts (via N-terminus) with GET3. GET3 shows a higher affinity for CAMLG than for GET1. Interacts (via N-terminus) with TNFRSF13B/TACI (via C-terminus). In terms of assembly, (Microbial infection) Interacts with human herpes virus 8/HHV-8 protein K7; this interaction modulates intracellular calcium concentration. As to expression, ubiquitous. Highest levels in brain, testis and ovary.

The protein localises to the endoplasmic reticulum membrane. Functionally, required for the post-translational delivery of tail-anchored (TA) proteins to the endoplasmic reticulum. Together with GET1/WRB, acts as a membrane receptor for soluble GET3/TRC40, which recognizes and selectively binds the transmembrane domain of TA proteins in the cytosol. Required for the stability of GET1. Stimulates calcium signaling in T cells through its involvement in elevation of intracellular calcium. Essential for the survival of peripheral follicular B cells. The chain is Guided entry of tail-anchored proteins factor CAMLG from Homo sapiens (Human).